Here is a 570-residue protein sequence, read N- to C-terminus: Urease subunit alpha (570 aa).

One can recognise a Urease domain in the interval 131-570; it reads GGMDSHIHFI…LPMAQRYFLF (440 aa). His-136, His-138, and Lys-219 together coordinate Ni(2+). Lys-219 carries the post-translational modification N6-carboxylysine. His-221 is a binding site for substrate. 2 residues coordinate Ni(2+): His-248 and His-274. The Proton donor role is filled by His-322. Position 362 (Asp-362) interacts with Ni(2+).

Belongs to the metallo-dependent hydrolases superfamily. Urease alpha subunit family. Heterotrimer of UreA (gamma), UreB (beta) and UreC (alpha) subunits. Three heterotrimers associate to form the active enzyme. Ni cation serves as cofactor. In terms of processing, carboxylation allows a single lysine to coordinate two nickel ions.

It localises to the cytoplasm. It catalyses the reaction urea + 2 H2O + H(+) = hydrogencarbonate + 2 NH4(+). The protein operates within nitrogen metabolism; urea degradation; CO(2) and NH(3) from urea (urease route): step 1/1. The polypeptide is Urease subunit alpha (Sinorhizobium medicae (strain WSM419) (Ensifer medicae)).